The following is a 143-amino-acid chain: Large ribosomal subunit protein uL11 (143 aa).

This sequence belongs to the universal ribosomal protein uL11 family. As to quaternary structure, part of the ribosomal stalk of the 50S ribosomal subunit. Interacts with L10 and the large rRNA to form the base of the stalk. L10 forms an elongated spine to which L12 dimers bind in a sequential fashion forming a multimeric L10(L12)X complex. Post-translationally, one or more lysine residues are methylated.

Functionally, forms part of the ribosomal stalk which helps the ribosome interact with GTP-bound translation factors. The sequence is that of Large ribosomal subunit protein uL11 from Polynucleobacter asymbioticus (strain DSM 18221 / CIP 109841 / QLW-P1DMWA-1) (Polynucleobacter necessarius subsp. asymbioticus).